The following is a 617-amino-acid chain: Neopullulanase SusA (617 aa).

Positions 1–22 are cleaved as a signal peptide; that stretch reads MKRNLLFIILLLLLPGLHQVFA. Residues Asn-138, Asn-143, Asp-144, Gly-164, and Asp-166 each coordinate Ca(2+). Active-site residues include Asp-331 and Glu-360.

This sequence belongs to the glycosyl hydrolase 13 family. The cofactor is Ca(2+).

The protein resides in the periplasm. It catalyses the reaction Hydrolysis of pullulan to panose (6-alpha-D-glucosylmaltose).. Its pathway is glycan degradation; starch degradation. Its function is as follows. Neopullulanase that cleaves 1,4-alpha-glucosidic linkages in starch to produce disaccharides or trisaccharides in starch degradation. The sequence is that of Neopullulanase SusA (susA) from Bacteroides thetaiotaomicron (strain ATCC 29148 / DSM 2079 / JCM 5827 / CCUG 10774 / NCTC 10582 / VPI-5482 / E50).